A 367-amino-acid chain; its full sequence is Methylthioribose-1-phosphate isomerase (367 aa).

Residues 54–56, Arg91, and Gln201 contribute to the substrate site; that span reads RGA. Asp242 acts as the Proton donor in catalysis. 252 to 253 contributes to the substrate binding site; it reads NK.

It belongs to the eIF-2B alpha/beta/delta subunits family. MtnA subfamily.

The enzyme catalyses 5-(methylsulfanyl)-alpha-D-ribose 1-phosphate = 5-(methylsulfanyl)-D-ribulose 1-phosphate. Its pathway is amino-acid biosynthesis; L-methionine biosynthesis via salvage pathway; L-methionine from S-methyl-5-thio-alpha-D-ribose 1-phosphate: step 1/6. Catalyzes the interconversion of methylthioribose-1-phosphate (MTR-1-P) into methylthioribulose-1-phosphate (MTRu-1-P). This Acidiphilium cryptum (strain JF-5) protein is Methylthioribose-1-phosphate isomerase.